Consider the following 434-residue polypeptide: Histidinol dehydrogenase (434 aa).

Positions 242, 264, and 267 each coordinate substrate. Q264 and H267 together coordinate Zn(2+). Catalysis depends on proton acceptor residues E332 and H333. Substrate contacts are provided by H333, D366, E420, and H425. Residue D366 participates in Zn(2+) binding. Zn(2+) is bound at residue H425.

The protein belongs to the histidinol dehydrogenase family. Zn(2+) serves as cofactor.

It catalyses the reaction L-histidinol + 2 NAD(+) + H2O = L-histidine + 2 NADH + 3 H(+). It participates in amino-acid biosynthesis; L-histidine biosynthesis; L-histidine from 5-phospho-alpha-D-ribose 1-diphosphate: step 9/9. Functionally, catalyzes the sequential NAD-dependent oxidations of L-histidinol to L-histidinaldehyde and then to L-histidine. The protein is Histidinol dehydrogenase of Desulfotalea psychrophila (strain LSv54 / DSM 12343).